Consider the following 485-residue polypeptide: Ribulose bisphosphate carboxylase large chain (485 aa).

The propeptide occupies 1-2 (MS). The residue at position 3 (proline 3) is an N-acetylproline. Lysine 14 bears the N6,N6,N6-trimethyllysine mark. 2 residues coordinate substrate: asparagine 123 and threonine 173. Lysine 175 (proton acceptor) is an active-site residue. Lysine 177 contacts substrate. Mg(2+) contacts are provided by lysine 201, aspartate 203, and glutamate 204. An N6-carboxylysine modification is found at lysine 201. The active-site Proton acceptor is the histidine 294. Substrate-binding residues include arginine 295, histidine 327, and serine 379.

The protein belongs to the RuBisCO large chain family. Type I subfamily. Heterohexadecamer of 8 large chains and 8 small chains; disulfide-linked. The disulfide link is formed within the large subunit homodimers. It depends on Mg(2+) as a cofactor. In terms of processing, the disulfide bond which can form in the large chain dimeric partners within the hexadecamer appears to be associated with oxidative stress and protein turnover.

Its subcellular location is the plastid. It is found in the chloroplast. It catalyses the reaction 2 (2R)-3-phosphoglycerate + 2 H(+) = D-ribulose 1,5-bisphosphate + CO2 + H2O. The catalysed reaction is D-ribulose 1,5-bisphosphate + O2 = 2-phosphoglycolate + (2R)-3-phosphoglycerate + 2 H(+). Functionally, ruBisCO catalyzes two reactions: the carboxylation of D-ribulose 1,5-bisphosphate, the primary event in carbon dioxide fixation, as well as the oxidative fragmentation of the pentose substrate in the photorespiration process. Both reactions occur simultaneously and in competition at the same active site. This is Ribulose bisphosphate carboxylase large chain from Bartlettina sordida (Purple torch).